The primary structure comprises 325 residues: 2-oxoglutarate-dependent dioxygenase tropC (325 aa).

In terms of domain architecture, Fe2OG dioxygenase spans 185–287 (PSIPMRLLHY…RYSVAFFLNG (103 aa)). Fe cation-binding residues include H210, D212, and H269. A 2-oxoglutarate-binding site is contributed by R278.

The protein belongs to the iron/ascorbate-dependent oxidoreductase family. It depends on Fe(2+) as a cofactor.

Its pathway is secondary metabolite biosynthesis. In terms of biological role, 2-oxoglutarate-dependent dioxygenase; part of the gene cluster that mediates the biosynthesis of the tropolone class of fungal maleic anhydrides. The pathway begins with the synthesis of 3-methylorcinaldehyde by the non-reducing polyketide synthase (PKS) tropA. 3-methylorcinaldehyde is the substrate for the FAD-dependent monooxygenase tropB to yield a dearomatized hydroxycyclohexadione. The 2-oxoglutarate-dependent dioxygenase tropC then performs the oxidative ring expansion to provide the first tropolone metabolite stipitaldehyde. Trop D converts stipitaldehyde into stipitacetal which is in turn converted to stipitalide by the short-chain dehydrogenase/reductase tropE. The next steps involve tropF, tropG, tropH, tropI and tropJ to form successive tropolone maleic anhydrides including stipitaldehydic, stipitatonic and stipitatic acids. This Talaromyces stipitatus (strain ATCC 10500 / CBS 375.48 / QM 6759 / NRRL 1006) (Penicillium stipitatum) protein is 2-oxoglutarate-dependent dioxygenase tropC.